Consider the following 302-residue polypeptide: 4-hydroxy-tetrahydrodipicolinate synthase (302 aa).

Thr-46 is a binding site for pyruvate. Tyr-134 acts as the Proton donor/acceptor in catalysis. Lys-162 serves as the catalytic Schiff-base intermediate with substrate. Residue Val-204 participates in pyruvate binding.

This sequence belongs to the DapA family. As to quaternary structure, homotetramer; dimer of dimers.

The protein localises to the cytoplasm. The enzyme catalyses L-aspartate 4-semialdehyde + pyruvate = (2S,4S)-4-hydroxy-2,3,4,5-tetrahydrodipicolinate + H2O + H(+). Its pathway is amino-acid biosynthesis; L-lysine biosynthesis via DAP pathway; (S)-tetrahydrodipicolinate from L-aspartate: step 3/4. Its function is as follows. Catalyzes the condensation of (S)-aspartate-beta-semialdehyde [(S)-ASA] and pyruvate to 4-hydroxy-tetrahydrodipicolinate (HTPA). The polypeptide is 4-hydroxy-tetrahydrodipicolinate synthase (Xylella fastidiosa (strain Temecula1 / ATCC 700964)).